A 215-amino-acid polypeptide reads, in one-letter code: LexA repressor (215 aa).

A DNA-binding region (H-T-H motif) is located at residues 28–48 (RAEIAAELGFSSPNAAEEHLR). Active-site for autocatalytic cleavage activity residues include Ser-133 and Lys-170.

This sequence belongs to the peptidase S24 family. Homodimer.

The enzyme catalyses Hydrolysis of Ala-|-Gly bond in repressor LexA.. Functionally, represses a number of genes involved in the response to DNA damage (SOS response), including recA and lexA. In the presence of single-stranded DNA, RecA interacts with LexA causing an autocatalytic cleavage which disrupts the DNA-binding part of LexA, leading to derepression of the SOS regulon and eventually DNA repair. This chain is LexA repressor, found in Burkholderia cenocepacia (strain ATCC BAA-245 / DSM 16553 / LMG 16656 / NCTC 13227 / J2315 / CF5610) (Burkholderia cepacia (strain J2315)).